The chain runs to 144 residues: Nucleoside diphosphate kinase (144 aa).

Positions 11, 59, 87, 93, 104, and 114 each coordinate ATP. H117 (pros-phosphohistidine intermediate) is an active-site residue.

Belongs to the NDK family. Homotetramer. The cofactor is Mg(2+).

Its subcellular location is the cytoplasm. It carries out the reaction a 2'-deoxyribonucleoside 5'-diphosphate + ATP = a 2'-deoxyribonucleoside 5'-triphosphate + ADP. The enzyme catalyses a ribonucleoside 5'-diphosphate + ATP = a ribonucleoside 5'-triphosphate + ADP. Functionally, major role in the synthesis of nucleoside triphosphates other than ATP. The ATP gamma phosphate is transferred to the NDP beta phosphate via a ping-pong mechanism, using a phosphorylated active-site intermediate. The polypeptide is Nucleoside diphosphate kinase (Aliivibrio fischeri (strain ATCC 700601 / ES114) (Vibrio fischeri)).